Here is a 74-residue protein sequence, read N- to C-terminus: Peptide BmKa2 (74 aa).

Residues 1 to 24 form the signal peptide; sequence MSSKTLLVLLLVGVLVSTFFTADA.

Belongs to the non-disulfide-bridged peptide (NDBP) superfamily. Long chain multifunctional peptide (group 2) family. In terms of tissue distribution, expressed by the venom gland.

It is found in the secreted. Its function is as follows. Highly acidic peptide that may have antibacterial activity. The sequence is that of Peptide BmKa2 from Olivierus martensii (Manchurian scorpion).